The sequence spans 523 residues: Apolipoprotein N-acyltransferase (523 aa).

7 consecutive transmembrane segments (helical) span residues 26-46, 49-66, 74-94, 109-129, 137-157, 185-205, and 212-232; these read LRFA…AFAP, WWWL…LVRQ, AWVG…WLYI, AAVL…AWLW, QLSG…SEWL, LVGV…LCAA, and WLAG…HTIA. The CN hydrolase domain maps to 246–487; the sequence is LQGNVPQDVK…LGTLQADVQG (242 aa). Catalysis depends on Glu-284, which acts as the Proton acceptor. Residue Lys-345 is part of the active site. Cys-395 serves as the catalytic Nucleophile. The chain crosses the membrane as a helical span at residues 494 to 514; it reads FVRTGNAPALGAGVLVLLAAL.

It belongs to the CN hydrolase family. Apolipoprotein N-acyltransferase subfamily.

Its subcellular location is the cell inner membrane. It carries out the reaction N-terminal S-1,2-diacyl-sn-glyceryl-L-cysteinyl-[lipoprotein] + a glycerophospholipid = N-acyl-S-1,2-diacyl-sn-glyceryl-L-cysteinyl-[lipoprotein] + a 2-acyl-sn-glycero-3-phospholipid + H(+). It functions in the pathway protein modification; lipoprotein biosynthesis (N-acyl transfer). Catalyzes the phospholipid dependent N-acylation of the N-terminal cysteine of apolipoprotein, the last step in lipoprotein maturation. The protein is Apolipoprotein N-acyltransferase of Ralstonia nicotianae (strain ATCC BAA-1114 / GMI1000) (Ralstonia solanacearum).